The following is a 331-amino-acid chain: MNSVLITGAGYRIRKRGDVLTIETGKDSDTAEPPRTLSPLGLDLLAIAGDHSISTAAVRLVTSHGGAIALMDGLGNPFGHFLPLGRSALIEQYEAQASAPEERRLEIARSICTGALENKRTLLSNLERIRGFDLSREIRLVEDAQDKALECQSLDSLRGVEGSGAHAYFQGFSLAFDEEWGFLGRSQNPATDPVNSLLSYGYGMLYIQARQALVLSGYSPYYGAYHETYKKQEALVYDLVEEFRQPVVDRTVVTFLAKHMATPDDFTYPDEGGCMIGTMAKKKYAAAVLTRIHGKVKYEEQTFQDIFKRQAERIGKALTEGDEYVPYRYRT.

Residues glutamate 161, histidine 226, and glutamate 241 each contribute to the Mn(2+) site.

The protein belongs to the CRISPR-associated endonuclease Cas1 family. In terms of assembly, homodimer, forms a heterotetramer with a Cas2 homodimer. Mg(2+) serves as cofactor. The cofactor is Mn(2+).

In terms of biological role, CRISPR (clustered regularly interspaced short palindromic repeat), is an adaptive immune system that provides protection against mobile genetic elements (viruses, transposable elements and conjugative plasmids). CRISPR clusters contain spacers, sequences complementary to antecedent mobile elements, and target invading nucleic acids. CRISPR clusters are transcribed and processed into CRISPR RNA (crRNA). Acts as a dsDNA endonuclease. Involved in the integration of spacer DNA into the CRISPR cassette. This is CRISPR-associated endonuclease Cas1 1 from Methanospirillum hungatei JF-1 (strain ATCC 27890 / DSM 864 / NBRC 100397 / JF-1).